Here is a 1379-residue protein sequence, read N- to C-terminus: DNA-directed RNA polymerase subunit beta (1379 aa).

It belongs to the RNA polymerase beta chain family. The RNAP catalytic core consists of 2 alpha, 1 beta, 1 beta' and 1 omega subunit. When a sigma factor is associated with the core the holoenzyme is formed, which can initiate transcription.

The catalysed reaction is RNA(n) + a ribonucleoside 5'-triphosphate = RNA(n+1) + diphosphate. DNA-dependent RNA polymerase catalyzes the transcription of DNA into RNA using the four ribonucleoside triphosphates as substrates. This Chelativorans sp. (strain BNC1) protein is DNA-directed RNA polymerase subunit beta.